A 463-amino-acid polypeptide reads, in one-letter code: Quinolone resistance protein NorB (463 aa).

14 helical membrane-spanning segments follow: residues 19–39 (IVLS…VVLI), 53–73 (IAVS…GGLA), 86–106 (IILN…LLLI), 107–127 (IGRL…LSII), 142–162 (YWSI…GAVA), 165–185 (LGWR…LFLI), 201–221 (FDIK…ILIT), 230–250 (SLLF…FIVL), 273–293 (TASN…NTFV), 299–319 (YSLL…LIMI), 334–354 (PMLI…LTFL), 357–377 (ILYV…LGIY), 403–423 (MASA…YAIV), and 435–455 (IALW…LLLV).

Belongs to the major facilitator superfamily. TCR/Tet family.

The protein localises to the cell membrane. In terms of biological role, multidrug efflux pump that acts independently of NorA and is one of the factors that confers resistance against diverse quinolones and chemical compounds. The protein is Quinolone resistance protein NorB (norB) of Staphylococcus aureus (strain bovine RF122 / ET3-1).